The primary structure comprises 193 residues: Ribonuclease HII (193 aa).

In terms of domain architecture, RNase H type-2 spans 15–193 (YIVAGVDEAG…SYHRRSFKSC (179 aa)). A divalent metal cation-binding residues include Asp21, Glu22, and Asp112.

The protein belongs to the RNase HII family. Requires Mn(2+) as cofactor. Mg(2+) serves as cofactor.

It is found in the cytoplasm. The enzyme catalyses Endonucleolytic cleavage to 5'-phosphomonoester.. Functionally, endonuclease that specifically degrades the RNA of RNA-DNA hybrids. The sequence is that of Ribonuclease HII (rnhB) from Rickettsia prowazekii (strain Madrid E).